The chain runs to 169 residues: Putative cysteine protease YraA (169 aa).

In terms of domain architecture, PfpI endopeptidase spans 3–169 (KKIAVLVTDQ…FNRESLNLLK (167 aa)). Cys103 (nucleophile) is an active-site residue. His104 is a catalytic residue.

The protein belongs to the peptidase C56 family.

Its function is as follows. Functions in the protection against aldehyde-stress, possibly by degrading damaged proteins. This is Putative cysteine protease YraA (yraA) from Bacillus subtilis (strain 168).